Reading from the N-terminus, the 2115-residue chain is Non-reducing polyketide synthase ascC (2115 aa).

A disordered region spans residues 1-21 (MTLIQTKHSASAAVFSPQSTA). The N-terminal acylcarrier protein transacylase domain (SAT) stretch occupies residues 14-260 (VFSPQSTAPK…HNSRNTELAQ (247 aa)). The 425-residue stretch at 381–805 (PDSIAIVGSA…GSNSALICSE (425 aa)) folds into the Ketosynthase family 3 (KS3) domain. Active-site for beta-ketoacyl synthase activity residues include Cys553, His689, and His728. Residues 908–1210 (LTFSGQSRTT…ANPSAHTFQA (303 aa)) are malonyl-CoA:ACP transacylase (MAT) domain. Ser995 (for acyl/malonyl transferase activity) is an active-site residue. An N-terminal hotdog fold region spans residues 1280 to 1406 (PKKVQQLVTL…GDFFATSGEM (127 aa)). Residues 1280 to 1581 (PKKVQQLVTL…FMRIKAAKLE (302 aa)) form the PKS/mFAS DH domain. The interval 1285 to 1580 (QLVTLKKTEG…QFMRIKAAKL (296 aa)) is product template (PT) domain. His1315 functions as the Proton acceptor; for dehydratase activity in the catalytic mechanism. Residues 1428–1581 (DAERLRTATA…FMRIKAAKLE (154 aa)) are C-terminal hotdog fold. The active-site Proton donor; for dehydratase activity is Asp1492. The disordered stretch occupies residues 1587–1624 (ANPGSKTKSTNGNALPSVPRSVPAGPTSAPQQVAPTTM). Polar residues predominate over residues 1588 to 1600 (NPGSKTKSTNGNA). Residues 1640 to 1724 (PSKIADLKSL…PTAALTEGLV (85 aa)) form the Carrier domain. At Ser1674 the chain carries O-(pantetheine 4'-phosphoryl)serine. Positions 1734 to 1748 (SDSIRNSTGFHTTIP) are enriched in polar residues. Residues 1734–1767 (SDSIRNSTGFHTTIPATPAELHSNPPDSLDGSTV) are disordered. Residues 1777–2107 (ARFKLDTMVY…YDFLLGELEN (331 aa)) form a thioesterase (TE) domain region. Active-site for thioesterase activity residues include Ser1897 and Asp2045.

The catalysed reaction is 3 malonyl-CoA + acetyl-CoA + 2 H(+) = orsellinate + 3 CO2 + 4 CoA. It functions in the pathway secondary metabolite biosynthesis; terpenoid biosynthesis. Functionally, non-reducing polyketide synthase; part of the asc-1 gene cluster that mediates the biosynthesis of both ascochlorin and ascofuranone, a strong inhibitor of cyanide-insensitive alternative oxidases and a promising drug candidate against African trypanosomiasis. The first step in the pathway is performed by the non-reducing polyketide synthase ascC that produces orsellinic acid by condensing acetyl-CoA with 3 malonyl-CoA units. Orsellinic acid is then prenylated by the prenyltransferase ascA to yield ilicicolinic acid B. Ilicicolinic acid B is further reduced to ilicicolin B by the reductase ascB. The halogenase ascD then chlorinates ilicicolin B to produce ilicicolin A which is converted to ilicicolin A epoxide by the cytochrome P450 monooxygenase ascE that catalyzes stereoselective epoxidation of the terminal double bond of the prenyl group. Ilicicolin A epoxide is the last common precursor for the biosynthesis of ascofuranone and ascochlorin. The terpene cyclase ascF produces a monocyclic terpene, and the cyclization reaction is proposed to be initiated by protonation of the terminal epoxide of ilicicolin A epoxide to generate a monocyclic tertiarycation, which is followed by a series of hydride and methyl shifts with abstraction of proton, leading to the formation of the (14S,15R,19R)-trimethylcyclohexanone ring structure of ilicicolin C, which is finally reduced to ascochlorin by the dehydrogenase ascG. On the other hand, ilicicolin A epoxide is hydroxylated by the cytochrome P450 monooxygenase ascH, and the resultant product is cyclized by the terpene cyclase ascI to ascofuranol via protonation-initiated epoxide ring opening, which facilitates the 6-endo-tet cyclization to form the tetrahy-drofuran ring. Finally, ascofuranol is oxidized into ascofuranone by ascJ. The sequence is that of Non-reducing polyketide synthase ascC from Acremonium egyptiacum (Oospora egyptiaca).